Here is a 727-residue protein sequence, read N- to C-terminus: Catalase-peroxidase (727 aa).

Positions 1–24 (MDQKSDSAGKCPVAHTAPRGRSNR) are disordered. The segment at residues 95 to 217 (WHSAGTYRIT…LAAVQMGLIY (123 aa)) is a cross-link (tryptophyl-tyrosyl-methioninium (Trp-Tyr) (with M-243)). His-96 serves as the catalytic Proton acceptor. The tryptophyl-tyrosyl-methioninium (Tyr-Met) (with W-95) cross-link spans 217–243 (YVNPEGPNGNPDPVAAARDIRETFARM). His-258 contributes to the heme b binding site.

This sequence belongs to the peroxidase family. Peroxidase/catalase subfamily. Homodimer or homotetramer. The cofactor is heme b. Formation of the three residue Trp-Tyr-Met cross-link is important for the catalase, but not the peroxidase activity of the enzyme.

The enzyme catalyses H2O2 + AH2 = A + 2 H2O. It catalyses the reaction 2 H2O2 = O2 + 2 H2O. Functionally, bifunctional enzyme with both catalase and broad-spectrum peroxidase activity. This is Catalase-peroxidase from Rhizobium meliloti (strain 1021) (Ensifer meliloti).